Consider the following 1360-residue polypeptide: DNA-directed RNA polymerase subunit beta (1360 aa).

It belongs to the RNA polymerase beta chain family. As to quaternary structure, the RNAP catalytic core consists of 2 alpha, 1 beta, 1 beta' and 1 omega subunit. When a sigma factor is associated with the core the holoenzyme is formed, which can initiate transcription.

It carries out the reaction RNA(n) + a ribonucleoside 5'-triphosphate = RNA(n+1) + diphosphate. Functionally, DNA-dependent RNA polymerase catalyzes the transcription of DNA into RNA using the four ribonucleoside triphosphates as substrates. This Ruthia magnifica subsp. Calyptogena magnifica protein is DNA-directed RNA polymerase subunit beta.